The chain runs to 203 residues: Probable NADPH:quinone oxidoreductase 2 (203 aa).

It belongs to the SsuE family. As to quaternary structure, homotetramer. FMN is required as a cofactor.

It catalyses the reaction a quinone + NADH + H(+) = a quinol + NAD(+). The enzyme catalyses a quinone + NADPH + H(+) = a quinol + NADP(+). In terms of biological role, the enzyme apparently serves as a quinone reductase in connection with conjugation reactions of hydroquinones involved in detoxification pathways. This chain is Probable NADPH:quinone oxidoreductase 2, found in Oryza sativa subsp. japonica (Rice).